Consider the following 494-residue polypeptide: MIKFALALTLCLAGASLSLAQHNPQWWGNRNTIVHLFEWKWSDIAEECETFLAPRGFAGVQVSPVNENIISAGRPWWERYQPISYKLTTRSGNEEEFADMVRRCNDVGIRIYVDVLLNHMSGDFDGVAVGTAGTEAEPSKKSFPGVPYSAQDFHPSCEITDWNDRFQVQQCELVGLKDLNQHSDYVRSKLIEFLDHLIELGVAGFRVDAAKHMAAEDLEYIYGSLSNLNIEHGFPHNARPFIFQEVIDHGHETVSREEYNGLGAVTEFRFSEEIGNAFRGNNALKWLQSWGTDWGFLSSEQALTFVDNHDNQRDMGSVLNYKSPRQYKMATAFHLAYPYGISRVMSSFAFDDHDTPPPQDAQENIISPEFDDDGACVNGWICEHRWRQIYAMVGFKNAVRDTQLSEWWDNGDNQISFCRGNKGFLAVNNNQYDLSQELNTCLPAGEYCDVISGSLIDGACTGKSVTVNEHGYGYIHIGSDDFDGVLALHVNAKV.

Positions 1–20 are cleaved as a signal peptide; sequence MIKFALALTLCLAGASLSLA. The residue at position 21 (Q21) is a Pyrrolidone carboxylic acid. A disulfide bridge links C48 with C104. The Ca(2+) site is built by N118, Q169, and D178. C157 and C171 are oxidised to a cystine. R206 contacts chloride. Catalysis depends on D208, which acts as the Nucleophile. H212 is a binding site for Ca(2+). The active-site Proton donor is the E245. Chloride contacts are provided by N308 and R343. 3 disulfide bridges follow: C376/C382, C418/C441, and C448/C460.

This sequence belongs to the glycosyl hydrolase 13 family. As to quaternary structure, monomer. Requires Ca(2+) as cofactor. It depends on chloride as a cofactor.

It is found in the secreted. It catalyses the reaction Endohydrolysis of (1-&gt;4)-alpha-D-glucosidic linkages in polysaccharides containing three or more (1-&gt;4)-alpha-linked D-glucose units.. In Drosophila kikkawai (Fruit fly), this protein is Alpha-amylase-related protein (Amyrel).